Consider the following 151-residue polypeptide: MHKAPKGTALAFDFGETRIGVAQGDAELGLSHPLSTVTGGSNDEKFAAIAKLVQEWQPRYFVVGLPVHTDGTKHEMTHLSRKFGRRLNGRFNLPVYWVDERLSSVYAESLLSEAQVFGKKRKSVLDQVAAQAILHGFFEGGPAECFNGREG.

This sequence belongs to the YqgF nuclease family.

The protein localises to the cytoplasm. Could be a nuclease involved in processing of the 5'-end of pre-16S rRNA. The polypeptide is Putative pre-16S rRNA nuclease (Neisseria meningitidis serogroup C (strain 053442)).